A 439-amino-acid polypeptide reads, in one-letter code: MLNSYVVREVSNDKLKWEYEFAVDKKYFLDQLDSKLSEIAMNVKVPGFRVGKASIDLVRKEYLNEAMTSVVKKTIESTSSDFVKNSKFGEIISSNIDIVSYPSYYSDNDKEEDLVYKLSFEVMPEAPLMDIDNIVLSDIEVDIQECDVNEFIENLKKQRPDFVIVDDPEYVIQGSDKLVIDYQNKIKGKILRGGSAKDFVLVLGKGVALREFEDQLIGMKVGESKTFPLTFPNDYGMVHLAGKTTDMSVTVKSVYVMKGMRDSEAIAKDYGFKDVGHMEDFARKRIKQQFDQMVFTIVKKELFDYMDANYVIDVPECVVTQEIAKINKEIRDSGEDIQIDVEKEAIKRVKLGMLLIKMSRHNNITIKNEDVFSFIQSNYADYGVDIGNVLKMLQSNKNFANYISGKVLEEKVINYIIGLAKKDKKVMTAKDISLMFENI.

The PPIase FKBP-type domain occupies 175–260 (SDKLVIDYQN…VKSVYVMKGM (86 aa)).

This sequence belongs to the FKBP-type PPIase family. Tig subfamily.

Its subcellular location is the cytoplasm. The enzyme catalyses [protein]-peptidylproline (omega=180) = [protein]-peptidylproline (omega=0). Its function is as follows. Involved in protein export. Acts as a chaperone by maintaining the newly synthesized protein in an open conformation. Functions as a peptidyl-prolyl cis-trans isomerase. This Ehrlichia chaffeensis (strain ATCC CRL-10679 / Arkansas) protein is Trigger factor.